Consider the following 165-residue polypeptide: Putative BTB/POZ domain-containing protein At2g40440 (165 aa).

The BTB domain occupies 24 to 98; sequence VDVRLKAGDS…IYSDGSMLSA (75 aa).

The protein operates within protein modification; protein ubiquitination. Functionally, may act as a substrate-specific adapter of an E3 ubiquitin-protein ligase complex (CUL3-RBX1-BTB) which mediates the ubiquitination and subsequent proteasomal degradation of target proteins. This Arabidopsis thaliana (Mouse-ear cress) protein is Putative BTB/POZ domain-containing protein At2g40440.